The sequence spans 589 residues: PAN2-PAN3 deadenylation complex subunit pan3 (589 aa).

A disordered region spans residues 1-32; sequence MSVRKNSPASPKPTSRSRESSRSPSVTDLKDH. Residues 34 to 63 form a C3H1-type zinc finger; the sequence is KAKRTLCRNILLYGSCKHSENGCAFRHDGP. Residues 74–94 carry the PABPC-interacting motif-2 (PAM-2) motif; that stretch reads YSVKKKLNAASASFQPVRALP. The interval 201 to 457 is pseudokinase domain; that stretch reads EASRQTISAL…NLELFLQNHI (257 aa). ATP-binding positions include K255 and 302–309; that span reads DFYPCTTT. Residues 458–496 are a coiled coil; that stretch reads ESFFPIMSSPYVECEKMERKISDAFQHGRFFNILCKIMF. The interval 497–589 is knob domain; it reads IIDNNRASRE…DNVYEMEINS (93 aa).

This sequence belongs to the protein kinase superfamily. PAN3 family. Homodimer. Forms a heterotrimer with a catalytic subunit pan2 to form the poly(A)-nuclease (PAN) deadenylation complex. Interacts (via PAM-2 motif) with poly(A)-binding protein pab1 (via PABC domain), conferring substrate specificity of the enzyme complex.

Its subcellular location is the cytoplasm. The protein localises to the nucleus. Functionally, regulatory subunit of the poly(A)-nuclease (PAN) deadenylation complex, one of two cytoplasmic mRNA deadenylases involved in mRNA turnover. PAN specifically shortens poly(A) tails of RNA and the activity is stimulated by poly(A)-binding protein pab1. PAN deadenylation is followed by rapid degradation of the shortened mRNA tails by the CCR4-NOT complex. Deadenylated mRNAs are then degraded by two alternative mechanisms, namely exosome-mediated 3'-5' exonucleolytic degradation, or deadenylation-dependent mRNA decaping and subsequent 5'-3' exonucleolytic degradation by xrn1. May also be involved in post-transcriptional maturation of mRNA poly(A) tails. ppk26/pan3 acts as a positive regulator for PAN activity, recruiting the catalytic subunit pan2 to mRNA via its interaction with RNA and with pab1. In Schizosaccharomyces pombe (strain 972 / ATCC 24843) (Fission yeast), this protein is PAN2-PAN3 deadenylation complex subunit pan3 (ppk26).